The sequence spans 487 residues: Probable glutamate receptor (487 aa).

Positions 1 to 23 are cleaved as a signal peptide; sequence MDKGQHFVFFVLTTVLLLRESSH. At 24–169 the chain is on the extracellular side; sequence AGAMRNDAAA…FFHFLAPFSK (146 aa). Asn104 carries N-linked (GlcNAc...) asparagine glycosylation. Residues 170–190 form a helical membrane-spanning segment; that stretch reads ETWTGLLFAYILTCFCLFLVA. Residues 191–235 are Cytoplasmic-facing; that stretch reads RLSPCEWNEPKNEENHFTFLNSLWFGAGALALQGVTPRPKALSVR. Residues 236-256 form a helical membrane-spanning segment; that stretch reads VIAAIWWLFTIALLAAYIANF. Residues 257-419 are Extracellular-facing; it reads TALLSSGSEQ…ERWSPLQPQA (163 aa). The helical transmembrane segment at 420-440 threads the bilayer; that stretch reads LGGLFLTLAIGLALGVIAAVV. Topologically, residues 441–487 are cytoplasmic; it reads ELSNKSRHAAGHVKKSCCSIFTEEMCTRLRIKENTRQSQETSGRANA.

It belongs to the glutamate-gated ion channel (TC 1.A.10.1) family.

It is found in the cell membrane. It localises to the postsynaptic cell membrane. In terms of biological role, receptor for glutamate. L-glutamate acts as an excitatory neurotransmitter at many synapses in the central nervous system. The postsynaptic actions of Glu are mediated by a variety of receptors that are named according to their selective agonists. In Anas platyrhynchos (Mallard), this protein is Probable glutamate receptor (KBP).